The primary structure comprises 318 residues: tRNA uridine(34) hydroxylase (318 aa).

The Rhodanese domain maps to glutamine 125–lysine 219. The Cysteine persulfide intermediate role is filled by cysteine 179.

This sequence belongs to the TrhO family.

The catalysed reaction is uridine(34) in tRNA + AH2 + O2 = 5-hydroxyuridine(34) in tRNA + A + H2O. In terms of biological role, catalyzes oxygen-dependent 5-hydroxyuridine (ho5U) modification at position 34 in tRNAs. The chain is tRNA uridine(34) hydroxylase from Acholeplasma laidlawii (strain PG-8A).